Here is a 173-residue protein sequence, read N- to C-terminus: RNA pyrophosphohydrolase (173 aa).

A Nudix hydrolase domain is found at 6-149 (GFRANVGIII…KRDVYRKVMK (144 aa)). Residues 38–59 (GGVDDGESAEEAMYRELYEEVG) carry the Nudix box motif.

It belongs to the Nudix hydrolase family. RppH subfamily. It depends on a divalent metal cation as a cofactor.

Functionally, accelerates the degradation of transcripts by removing pyrophosphate from the 5'-end of triphosphorylated RNA, leading to a more labile monophosphorylated state that can stimulate subsequent ribonuclease cleavage. The chain is RNA pyrophosphohydrolase from Shewanella pealeana (strain ATCC 700345 / ANG-SQ1).